The chain runs to 84 residues: Cytochrome c oxidase subunit 12, mitochondrial (84 aa).

A CHCH domain is found at 27–70 (TKHCWQNYVDYHKCILAKGEDFAPCRQFWLAYRSLCPSGWYQRW). Positions 30 to 40 (CWQNYVDYHKC) match the Cx9C motif motif. 2 disulfide bridges follow: C30–C62 and C40–C51. The Cx10C motif motif lies at 51–62 (CRQFWLAYRSLC).

The protein belongs to the cytochrome c oxidase subunit 6B family. As to quaternary structure, component of the cytochrome c oxidase (complex IV, CIV), a multisubunit enzyme composed of 11 subunits. The complex is composed of a catalytic core of 3 subunits Cox1, Cox2 and Cox3, encoded in the mitochondrial DNA, and 8 supernumerary subunits Cox4, Cox5a/Cox5, Cox6, Cox7, Cox8, Cox7a/Cox9, Cox6b/Cox12 and Cox6a/Cox13, which are encoded in the nuclear genome. The complex exists as a monomer or a dimer and forms respiratory supercomplexes (SCs) in the inner mitochondrial membrane with NADH-ubiquinone oxidoreductase (complex I, CI) and ubiquinol-cytochrome c oxidoreductase (cytochrome b-c1 complex, complex III, CIII), resulting in various different assemblies (supercomplexes I(1)IV(1), I(1)III(3)IV(2), III(2)IV(1) and III(2)IV(2) as well as larger supercomplexes of compositions like I(1)III(2)IV(5-6)).

It is found in the mitochondrion inner membrane. It functions in the pathway energy metabolism; oxidative phosphorylation. Component of the cytochrome c oxidase, the last enzyme in the mitochondrial electron transport chain which drives oxidative phosphorylation. The respiratory chain contains 3 multisubunit complexes succinate dehydrogenase (complex II, CII), ubiquinol-cytochrome c oxidoreductase (cytochrome b-c1 complex, complex III, CIII) and cytochrome c oxidase (complex IV, CIV), that cooperate to transfer electrons derived from NADH and succinate to molecular oxygen, creating an electrochemical gradient over the inner membrane that drives transmembrane transport and the ATP synthase. Cytochrome c oxidase is the component of the respiratory chain that catalyzes the reduction of oxygen to water. Electrons originating from reduced cytochrome c in the intermembrane space (IMS) are transferred via the dinuclear copper A center (CU(A)) of Cox2 and heme A of Cox1 to the active site in Cox1, a binuclear center (BNC) formed by heme A3 and copper B (CU(B)). The BNC reduces molecular oxygen to 2 water molecules using 4 electrons from cytochrome c in the IMS and 4 protons from the mitochondrial matrix. This is Cytochrome c oxidase subunit 12, mitochondrial (cox-13) from Neurospora crassa (strain ATCC 24698 / 74-OR23-1A / CBS 708.71 / DSM 1257 / FGSC 987).